A 231-amino-acid polypeptide reads, in one-letter code: uncharacterized protein (231 aa).

Positions R3 to I119 constitute an RCK N-terminal domain. The region spanning H134–P221 is the RCK C-terminal domain.

This is an uncharacterized protein from Mycoplasma pneumoniae (strain ATCC 29342 / M129 / Subtype 1) (Mycoplasmoides pneumoniae).